The primary structure comprises 427 residues: Glutamate-1-semialdehyde 2,1-aminomutase (427 aa).

Lys-264 is subject to N6-(pyridoxal phosphate)lysine.

This sequence belongs to the class-III pyridoxal-phosphate-dependent aminotransferase family. HemL subfamily. As to quaternary structure, homodimer. Pyridoxal 5'-phosphate serves as cofactor.

Its subcellular location is the cytoplasm. It catalyses the reaction (S)-4-amino-5-oxopentanoate = 5-aminolevulinate. It functions in the pathway porphyrin-containing compound metabolism; protoporphyrin-IX biosynthesis; 5-aminolevulinate from L-glutamyl-tRNA(Glu): step 2/2. This chain is Glutamate-1-semialdehyde 2,1-aminomutase, found in Clostridium botulinum (strain Eklund 17B / Type B).